The sequence spans 269 residues: Putative esterase/lipase 1 (269 aa).

The active site involves H27. S94 acts as the Charge relay system in catalysis.

Belongs to the lipase/esterase LIP3/BchO family.

The chain is Putative esterase/lipase 1 from Mycoplasma pneumoniae (strain ATCC 29342 / M129 / Subtype 1) (Mycoplasmoides pneumoniae).